We begin with the raw amino-acid sequence, 294 residues long: Ethylene-inducing xylanase 3 (294 aa).

A signal peptide spans 1 to 19 (MVCFSSLFVAASAIAGVFA). The GH11 domain maps to 31–226 (QSTPSSQGTH…SSGSARINVA (196 aa)). Catalysis depends on Glu122, which acts as the Nucleophile. Glu213 serves as the catalytic Proton donor. A CBM1 domain is found at 259-294 (SCAARWGQCGGSGWNGATCCSAGTCQAQNQWYSQCL).

Belongs to the glycosyl hydrolase 11 (cellulase G) family.

It carries out the reaction Endohydrolysis of (1-&gt;4)-beta-D-xylosidic linkages in xylans.. It participates in glycan degradation; xylan degradation. Functionally, endo-1,4-beta-xylanase involved in the hydrolysis of xylan, a major structural heterogeneous polysaccharide found in plant biomass representing the second most abundant polysaccharide in the biosphere, after cellulose. Exhibits immunity-inducing activity in Nicotiana benthamiana. Can induce strong oxidative burst, activate the expression of defense-related genes, and increase resistance against oomycete and fungal pathogens in N.benthamiana. This Verticillium dahliae (strain VdLs.17 / ATCC MYA-4575 / FGSC 10137) (Verticillium wilt) protein is Ethylene-inducing xylanase 3.